Here is a 377-residue protein sequence, read N- to C-terminus: Guanine nucleotide-binding protein subunit alpha-13 (377 aa).

2 S-palmitoyl cysteine lipidation sites follow: C14 and C18. The G-alpha domain occupies 47-377; it reads RLVKILLLGA…HDNLKQLMLQ (331 aa). Residues 50–63 form a G1 motif region; it reads KILLLGAGESGKST. GTP contacts are provided by residues 58-63, S173, and 197-200; these read ESGKST and LLAR. S62 lines the Mg(2+) pocket. Residues 195-203 form a G2 motif region; that stretch reads DILLARRPT. T203 is a binding site for Mg(2+). T203 is subject to Phosphothreonine; by PKA. Residues 218 to 227 are G3 motif; sequence FKMVDVGGQR. Residues 287–294 form a G4 motif region; the sequence is ILFLNKTD. GTP is bound by residues 291 to 294 and A349; that span reads NKTD. The G5 motif stretch occupies residues 347–352; it reads TTAINT.

This sequence belongs to the G-alpha family. G(12) subfamily. As to quaternary structure, g proteins are composed of 3 units; alpha, beta and gamma. The alpha chain contains the guanine nucleotide binding site. Interacts with UBXD5. Interacts with HAX1. Interacts (in GTP-bound form) with PPP5C (via TPR repeats); activates PPP5C phosphatase activity and translocates PPP5C to the cell membrane. Interacts with RGS22. Interacts (in GTP-bound form) with ARHGEF1. Interacts (in GTP-bound form) with ARHGEF11 (via RGS domain). Interacts (in GTP-bound form) with ARHGEF12 (via RGS domain). Interacts with CTNND1. Interacts with GASL2L2. Interacts with GPR35. Interacts with GPR174. In terms of processing, palmitoylation is critical for proper membrane localization and signaling. Post-translationally, phosphorylation on Thr-203 by PKA destabilizes the heterotrimer of alpha, beta and gamma, and inhibits Rho activation. As to expression, expressed in testis, including in Leydig cells and in the seminiferous epithelium, in differentiating cells from the spermatogonia to mature spermatozoa stages and round spermatids (at protein level). Expressed in 99.2% of spermatozoa from healthy individuals, but only in 28.6% of macrocephalic spermatozoa from infertile patients (at protein level).

Its subcellular location is the cell membrane. It is found in the melanosome. The protein localises to the cytoplasm. It localises to the nucleus. In terms of biological role, guanine nucleotide-binding proteins (G proteins) are involved as modulators or transducers in various transmembrane signaling systems. Activates effector molecule RhoA by binding and activating RhoGEFs (ARHGEF1/p115RhoGEF, ARHGEF11/PDZ-RhoGEF and ARHGEF12/LARG). GNA13-dependent Rho signaling subsequently regulates transcription factor AP-1 (activating protein-1). Promotes tumor cell invasion and metastasis by activating RhoA/ROCK signaling pathway. Inhibits CDH1-mediated cell adhesion in a process independent from Rho activation. In lymphoid follicles, transmits P2RY8- and S1PR2-dependent signals that lead to inhibition of germinal center (GC) B cell growth and migration outside the GC niche. This chain is Guanine nucleotide-binding protein subunit alpha-13 (GNA13), found in Homo sapiens (Human).